Reading from the N-terminus, the 158-residue chain is MAKVESFTLDHTKVLAPYVRKITVENGPKGDAITNFDLRLVQPNKTAIDTAGLHTIEHMLAGLLRDRMDGVIDCSPFGCRTGFHLITWGEHDTVEVAKALKSSLEFIAGPAKWEDVQGTTIDSCGNYKDHSLFSAKEWAKLILSQGISSDPFVRKVVE.

The Fe cation site is built by H54, H58, and C124.

This sequence belongs to the LuxS family. As to quaternary structure, homodimer. Fe cation is required as a cofactor.

The catalysed reaction is S-(5-deoxy-D-ribos-5-yl)-L-homocysteine = (S)-4,5-dihydroxypentane-2,3-dione + L-homocysteine. In terms of biological role, involved in the synthesis of autoinducer 2 (AI-2) which is secreted by bacteria and is used to communicate both the cell density and the metabolic potential of the environment. The regulation of gene expression in response to changes in cell density is called quorum sensing. Catalyzes the transformation of S-ribosylhomocysteine (RHC) to homocysteine (HC) and 4,5-dihydroxy-2,3-pentadione (DPD). The chain is S-ribosylhomocysteine lyase from Lactiplantibacillus plantarum (strain ATCC BAA-793 / NCIMB 8826 / WCFS1) (Lactobacillus plantarum).